A 286-amino-acid polypeptide reads, in one-letter code: ATP synthase gamma chain (286 aa).

This sequence belongs to the ATPase gamma chain family. F-type ATPases have 2 components, CF(1) - the catalytic core - and CF(0) - the membrane proton channel. CF(1) has five subunits: alpha(3), beta(3), gamma(1), delta(1), epsilon(1). CF(0) has three main subunits: a, b and c.

It is found in the cell inner membrane. Produces ATP from ADP in the presence of a proton gradient across the membrane. The gamma chain is believed to be important in regulating ATPase activity and the flow of protons through the CF(0) complex. The polypeptide is ATP synthase gamma chain (Shewanella frigidimarina (strain NCIMB 400)).